Consider the following 121-residue polypeptide: UPF0344 protein BCE_1257 (121 aa).

4 helical membrane passes run 6–26, 38–58, 65–85, and 92–112; these read ITAWALGLILFFVAYSLYSAG, LMYIFIIVTGFMLYMSIVKTA, WYGLKMLAGILVIGGMEMVLV, and PTGAVWGLFIVALVAVIYLGL.

Belongs to the UPF0344 family.

It localises to the cell membrane. This chain is UPF0344 protein BCE_1257, found in Bacillus cereus (strain ATCC 10987 / NRS 248).